Reading from the N-terminus, the 259-residue chain is Large ribosomal subunit protein eL8 (259 aa).

The disordered stretch occupies residues 1–24 (MAPKSKKVAPSPFAQPKAAKTTKN). Residues S11 and S33 each carry the phosphoserine modification.

Belongs to the eukaryotic ribosomal protein eL8 family. As to quaternary structure, component of the large ribosomal subunit (LSU). Mature yeast ribosomes consist of a small (40S) and a large (60S) subunit. The 40S small subunit contains 1 molecule of ribosomal RNA (18S rRNA) and at least 33 different proteins. The large 60S subunit contains 3 rRNA molecules (25S, 5.8S and 5S rRNA) and at least 46 different proteins.

It localises to the cytoplasm. Component of the ribosome, a large ribonucleoprotein complex responsible for the synthesis of proteins in the cell. The small ribosomal subunit (SSU) binds messenger RNAs (mRNAs) and translates the encoded message by selecting cognate aminoacyl-transfer RNA (tRNA) molecules. The large subunit (LSU) contains the ribosomal catalytic site termed the peptidyl transferase center (PTC), which catalyzes the formation of peptide bonds, thereby polymerizing the amino acids delivered by tRNAs into a polypeptide chain. The nascent polypeptides leave the ribosome through a tunnel in the LSU and interact with protein factors that function in enzymatic processing, targeting, and the membrane insertion of nascent chains at the exit of the ribosomal tunnel. In Schizosaccharomyces pombe (strain 972 / ATCC 24843) (Fission yeast), this protein is Large ribosomal subunit protein eL8 (rpl8).